The sequence spans 131 residues: Small ribosomal subunit protein bS6 (131 aa).

The tract at residues 98–131 (EASPMVKAKDERRERRDDFANETADDADAGDSEE) is disordered. Over residues 104–116 (KAKDERRERRDDF) the composition is skewed to basic and acidic residues. The segment covering 120–131 (TADDADAGDSEE) has biased composition (acidic residues).

It belongs to the bacterial ribosomal protein bS6 family.

Functionally, binds together with bS18 to 16S ribosomal RNA. This chain is Small ribosomal subunit protein bS6, found in Citrobacter koseri (strain ATCC BAA-895 / CDC 4225-83 / SGSC4696).